The chain runs to 89 residues: Bombyxin A-2 (89 aa).

The signal sequence occupies residues 1 to 19; that stretch reads MKILLAIALMLSTVMWVST. Pyrrolidone carboxylic acid is present on Gln-20. 3 cysteine pairs are disulfide-bonded: Cys-29–Cys-76, Cys-41–Cys-89, and Cys-75–Cys-80. The propeptide at 50–68 is c peptide like; the sequence is SDAQFASYGSAWLMPYSAG.

It belongs to the insulin family. As to quaternary structure, heterodimer of a B chain and an A chain linked by two disulfide bonds.

The protein resides in the secreted. In terms of biological role, brain peptide responsible for activation of prothoracic glands to produce ecdysone in insects. This chain is Bombyxin A-2 (BBXA2), found in Bombyx mori (Silk moth).